A 488-amino-acid polypeptide reads, in one-letter code: Thiamine transporter 2 (488 aa).

The Cytoplasmic segment spans residues 1–8 (MDSSCRTP). The chain crosses the membrane as a helical span at residues 9–29 (PSNSWVYPTVILCLFGFFSMF). The Extracellular portion of the chain corresponds to 30-54 (RPSEAFLIPFLSEPSKNLTSPEMTN). An N-linked (GlcNAc...) asparagine glycan is attached at asparagine 46. Residues 55–75 (EILPVWTYSYLATLPPVFVLT) traverse the membrane as a helical segment. Residues 76-82 (DYLRYKP) lie on the Cytoplasmic side of the membrane. A helical transmembrane segment spans residues 83 to 103 (VIMLHVVAFATSYLFLLFGQG). The Extracellular segment spans residues 104 to 111 (VMLMQTAE). The chain crosses the membrane as a helical span at residues 112-132 (FFFGVVSATEIAYFAYIYSMV). Topologically, residues 133-145 (SPEHYQKVSSYCR) are cytoplasmic. Residues 146–166 (SITLVAYTAGSVLAQLLVSLT) traverse the membrane as a helical segment. The Extracellular segment spans residues 167–172 (NLPYSS). Residues 173 to 193 (LFYISLACVSVAFFFSLFLPM) form a helical membrane-spanning segment. Over 194–276 (PKKSMFFHAK…YSSKHLVYWS (83 aa)) the chain is Cytoplasmic. A helical membrane pass occupies residues 277–297 (LWWAFATAGYNQILNYVQVLW). Topologically, residues 298-310 (EHKAPSQDSSIYN) are extracellular. Residues 311–331 (GAVEAIATFGGALASFSVGYL) traverse the membrane as a helical segment. The Cytoplasmic segment spans residues 332-335 (KVNW). A helical transmembrane segment spans residues 336–356 (DLLGELGLAVFSAVIAGSLFL). Residues 357–369 (MNYSRSIWVCYAG) lie on the Extracellular side of the membrane. Asparagine 358 carries an N-linked (GlcNAc...) asparagine glycan. A helical transmembrane segment spans residues 370-390 (YLLVKSSYSFLITIAVFQIAV). At 391–399 (NLSLERYAL) the chain is on the cytoplasmic side. Residues 400-420 (VFGIDTFIALVIQTIMTMIVV) form a helical membrane-spanning segment. Residues 421 to 428 (DQRGLQLP) lie on the Extracellular side of the membrane. The helical transmembrane segment at 429-449 (VTTQFLVYGSYFAVIAGVFLM) threads the bilayer. The Cytoplasmic portion of the chain corresponds to 450–488 (RSIYILCSAKCRKEVQNLATTRSPNEPHPQEPSNVSTKF). Residues 469-488 (TTRSPNEPHPQEPSNVSTKF) are disordered.

It belongs to the reduced folate carrier (RFC) transporter (TC 2.A.48) family. High expression in kidney, brain, lung and small intestine. Detected in pancreatic acinar cells (at protein level). Also expressed strongly in pancreatic islet cells.

It localises to the membrane. It carries out the reaction thiamine(out) + H(+)(in) = thiamine(in) + H(+)(out). Its function is as follows. High-affinity transporter for the intake of thiamine. Unlike the human ortholog, lacks H(+)-dependent pyridoxine transport activity due to an absence of seven critical amino-acids required for pyridoxine transport. The protein is Thiamine transporter 2 (Slc19a3) of Mus musculus (Mouse).